Here is a 227-residue protein sequence, read N- to C-terminus: Ribosomal RNA large subunit methyltransferase E (227 aa).

Residues Gly-78, Trp-80, Asp-103, Asp-119, and Asp-143 each coordinate S-adenosyl-L-methionine. Lys-183 serves as the catalytic Proton acceptor.

Belongs to the class I-like SAM-binding methyltransferase superfamily. RNA methyltransferase RlmE family.

The protein localises to the cytoplasm. The catalysed reaction is uridine(2552) in 23S rRNA + S-adenosyl-L-methionine = 2'-O-methyluridine(2552) in 23S rRNA + S-adenosyl-L-homocysteine + H(+). Specifically methylates the uridine in position 2552 of 23S rRNA at the 2'-O position of the ribose in the fully assembled 50S ribosomal subunit. The chain is Ribosomal RNA large subunit methyltransferase E from Rickettsia canadensis (strain McKiel).